The sequence spans 447 residues: Phosphoglucosamine mutase (447 aa).

The active-site Phosphoserine intermediate is the Ser100. Residues Ser100, Asp240, Asp242, and Asp244 each coordinate Mg(2+). A Phosphoserine modification is found at Ser100.

This sequence belongs to the phosphohexose mutase family. Mg(2+) is required as a cofactor. Activated by phosphorylation.

It carries out the reaction alpha-D-glucosamine 1-phosphate = D-glucosamine 6-phosphate. Functionally, catalyzes the conversion of glucosamine-6-phosphate to glucosamine-1-phosphate. The sequence is that of Phosphoglucosamine mutase from Clostridium botulinum (strain Eklund 17B / Type B).